A 391-amino-acid polypeptide reads, in one-letter code: Methionine import ATP-binding protein MetN 2 (391 aa).

The ABC transporter domain maps to 44 to 280 (VHVGKVFATP…PRHGATRALL (237 aa)). Residue 77–84 (GRSGAGKS) participates in ATP binding.

This sequence belongs to the ABC transporter superfamily. Methionine importer (TC 3.A.1.24) family. The complex is composed of two ATP-binding proteins (MetN), two transmembrane proteins (MetI) and a solute-binding protein (MetQ).

Its subcellular location is the cell inner membrane. It catalyses the reaction L-methionine(out) + ATP + H2O = L-methionine(in) + ADP + phosphate + H(+). The enzyme catalyses D-methionine(out) + ATP + H2O = D-methionine(in) + ADP + phosphate + H(+). Part of the ABC transporter complex MetNIQ involved in methionine import. Responsible for energy coupling to the transport system. The chain is Methionine import ATP-binding protein MetN 2 from Burkholderia ambifaria (strain ATCC BAA-244 / DSM 16087 / CCUG 44356 / LMG 19182 / AMMD) (Burkholderia cepacia (strain AMMD)).